The following is a 338-amino-acid chain: Glyceraldehyde-3-phosphate dehydrogenase 2 (338 aa).

Residues 13 to 14 (RI), Asp-35, and Arg-80 contribute to the NAD(+) site. D-glyceraldehyde 3-phosphate is bound by residues 151–153 (SCT), Thr-182, 211–212 (TG), and Arg-234. Cys-152 (nucleophile) is an active-site residue. Asn-316 is an NAD(+) binding site.

The protein belongs to the glyceraldehyde-3-phosphate dehydrogenase family. In terms of assembly, homotetramer.

Its subcellular location is the cytoplasm. It carries out the reaction D-glyceraldehyde 3-phosphate + phosphate + NAD(+) = (2R)-3-phospho-glyceroyl phosphate + NADH + H(+). It participates in carbohydrate degradation; glycolysis; pyruvate from D-glyceraldehyde 3-phosphate: step 1/5. Inhibited by koningic acid through the interaction of cysteine residues with koningic acid even at very low concentrations. This chain is Glyceraldehyde-3-phosphate dehydrogenase 2 (gpd2), found in Trichoderma koningii (Hypocrea koningii).